Here is a 67-residue protein sequence, read N- to C-terminus: Peptide Ctry2606 (67 aa).

Positions 1-23 (MKTQTALFSFFLVLLLVATQTEG) are cleaved as a signal peptide. A Leucine amide modification is found at leucine 33. Positions 37–67 (ALRNQNFVDYAFDPSLSAADWRALETLLEEY) are excised as a propeptide.

Belongs to the non-disulfide-bridged peptide (NDBP) superfamily. Short antimicrobial peptide (group 4) family. In terms of tissue distribution, expressed by the venom gland.

The protein resides in the secreted. Its function is as follows. Antimicrobial peptide. The chain is Peptide Ctry2606 from Chaerilus tryznai (Scorpion).